A 447-amino-acid chain; its full sequence is Argininosuccinate synthase (447 aa).

ATP contacts are provided by residues 17–25 (AFSGGLDTS) and Ala-43. Position 99 (Tyr-99) interacts with L-citrulline. Residues Gly-129 and Thr-131 each coordinate ATP. 3 residues coordinate L-aspartate: Thr-131, Asn-135, and Asp-136. Position 135 (Asn-135) interacts with L-citrulline. Asp-136 contacts ATP. The L-citrulline site is built by Arg-139 and Ser-192. Asp-194 serves as a coordination point for ATP. L-citrulline is bound by residues Thr-201, Glu-203, and Glu-280.

The protein belongs to the argininosuccinate synthase family. Type 2 subfamily. Homotetramer.

It is found in the cytoplasm. It carries out the reaction L-citrulline + L-aspartate + ATP = 2-(N(omega)-L-arginino)succinate + AMP + diphosphate + H(+). It functions in the pathway amino-acid biosynthesis; L-arginine biosynthesis; L-arginine from L-ornithine and carbamoyl phosphate: step 2/3. The sequence is that of Argininosuccinate synthase from Salmonella paratyphi B (strain ATCC BAA-1250 / SPB7).